A 255-amino-acid chain; its full sequence is tRNA pseudouridine synthase B (255 aa).

Asp58 serves as the catalytic Nucleophile.

It belongs to the pseudouridine synthase TruB family. Type 1 subfamily.

It catalyses the reaction uridine(55) in tRNA = pseudouridine(55) in tRNA. Responsible for synthesis of pseudouridine from uracil-55 in the psi GC loop of transfer RNAs. This is tRNA pseudouridine synthase B from Chlorobium chlorochromatii (strain CaD3).